Here is a 424-residue protein sequence, read N- to C-terminus: Arginine ADP-riboxanase OspC4 (424 aa).

His-85, Gln-86, Ser-87, Leu-91, Ile-104, Asn-114, Phe-130, His-148, Phe-153, Asp-173, and Glu-268 together coordinate NAD(+). Residue Glu-268 is part of the active site. 3 ANK repeats span residues 311 to 340, 355 to 386, and 393 to 422; these read MAHQ…FTKQ, NLYD…DVNK, and SGDT…GIRQ.

It belongs to the OspC family.

The protein localises to the secreted. The protein resides in the host cytoplasm. The catalysed reaction is L-arginyl-[protein] + NAD(+) = ADP-riboxanated L-argininyl-[protein] + nicotinamide + NH4(+) + H(+). Its function is as follows. ADP-riboxanase effector that mediates arginine ADP-riboxanation of host caspase CASP4/CASP11, thereby inhibiting pyroptosis. This is Arginine ADP-riboxanase OspC4 from Shigella flexneri.